The sequence spans 697 residues: Phosphatase and actin regulator 4-B (697 aa).

The stretch at 42–67 is one RPEL 1 repeat; the sequence is EVLERKISMRKPREELVKRGLIVDVP. Disordered stretches follow at residues 63-381 and 450-569; these read IVDV…LTLA and LKVP…SKDE. The span at 189–202 shows a compositional bias: basic and acidic residues; that stretch reads HVPEKTSEKYRPKS. Pro residues-rich tracts occupy residues 317–326 and 370–380; these read PSPPLPPKRA and APNPPVPPLTL. Composition is skewed to acidic residues over residues 454–469, 501–514, and 522–532; these read DDDD…DESL, QEED…DTDS, and EEDEDEEEEET. 2 RPEL repeats span residues 579-604 and 616-641; these read TQLN…QKNE and RRLT…RFNE.

The protein belongs to the phosphatase and actin regulator family. Binds ppp1ca and actin.

It localises to the cytoplasm. Its subcellular location is the cell projection. The protein resides in the lamellipodium. Functionally, regulator of protein phosphatase 1 (PP1) required for neural tube and optic fissure closure, and enteric neural crest cell (ENCCs) migration during development. Acts as an activator of PP1. During neural tube closure, localizes to the ventral neural tube and activates PP1, leading to down-regulate cell proliferation within cranial neural tissue and the neural retina. Also acts as a regulator of migration of enteric neural crest cells (ENCCs) by activating PP1, leading to repression of the integrin signaling through the rho/rock pathway. The protein is Phosphatase and actin regulator 4-B (phactr4-b) of Xenopus laevis (African clawed frog).